Consider the following 308-residue polypeptide: Tetraacyldisaccharide 4'-kinase (308 aa).

ATP is bound at residue 63–70; the sequence is SFGGNGKT.

This sequence belongs to the LpxK family.

The catalysed reaction is a lipid A disaccharide + ATP = a lipid IVA + ADP + H(+). It participates in glycolipid biosynthesis; lipid IV(A) biosynthesis; lipid IV(A) from (3R)-3-hydroxytetradecanoyl-[acyl-carrier-protein] and UDP-N-acetyl-alpha-D-glucosamine: step 6/6. In terms of biological role, transfers the gamma-phosphate of ATP to the 4'-position of a tetraacyldisaccharide 1-phosphate intermediate (termed DS-1-P) to form tetraacyldisaccharide 1,4'-bis-phosphate (lipid IVA). This is Tetraacyldisaccharide 4'-kinase from Campylobacter jejuni subsp. jejuni serotype O:2 (strain ATCC 700819 / NCTC 11168).